The primary structure comprises 202 residues: Small ribosomal subunit protein uS4c (202 aa).

The S4 RNA-binding domain occupies 90 to 153; that stretch reads MRLDNIIFRL…KSEAIISKNI (64 aa).

It belongs to the universal ribosomal protein uS4 family. Part of the 30S ribosomal subunit. Contacts protein S5. The interaction surface between S4 and S5 is involved in control of translational fidelity.

The protein localises to the plastid. Its subcellular location is the chloroplast. In terms of biological role, one of the primary rRNA binding proteins, it binds directly to 16S rRNA where it nucleates assembly of the body of the 30S subunit. Its function is as follows. With S5 and S12 plays an important role in translational accuracy. The polypeptide is Small ribosomal subunit protein uS4c (rps4) (Hookeria lucens (Moss)).